Reading from the N-terminus, the 617-residue chain is Chaperone protein HscA homolog (617 aa).

This sequence belongs to the heat shock protein 70 family.

Functionally, probable chaperone. Has a low intrinsic ATPase activity which is markedly stimulated by HscB. The protein is Chaperone protein HscA homolog of Vibrio vulnificus (strain CMCP6).